Here is a 616-residue protein sequence, read N- to C-terminus: 1-deoxy-D-xylulose-5-phosphate synthase (616 aa).

Thiamine diphosphate-binding positions include His-74 and 115 to 117 (GHS). Residue Asp-146 coordinates Mg(2+). Thiamine diphosphate is bound by residues 147–148 (GA), Asn-175, Tyr-282, and Glu-365. Residue Asn-175 coordinates Mg(2+).

Belongs to the transketolase family. DXPS subfamily. As to quaternary structure, homodimer. Mg(2+) serves as cofactor. The cofactor is thiamine diphosphate.

It carries out the reaction D-glyceraldehyde 3-phosphate + pyruvate + H(+) = 1-deoxy-D-xylulose 5-phosphate + CO2. It participates in metabolic intermediate biosynthesis; 1-deoxy-D-xylulose 5-phosphate biosynthesis; 1-deoxy-D-xylulose 5-phosphate from D-glyceraldehyde 3-phosphate and pyruvate: step 1/1. Functionally, catalyzes the acyloin condensation reaction between C atoms 2 and 3 of pyruvate and glyceraldehyde 3-phosphate to yield 1-deoxy-D-xylulose-5-phosphate (DXP). This is 1-deoxy-D-xylulose-5-phosphate synthase from Chromobacterium violaceum (strain ATCC 12472 / DSM 30191 / JCM 1249 / CCUG 213 / NBRC 12614 / NCIMB 9131 / NCTC 9757 / MK).